Reading from the N-terminus, the 80-residue chain is Putative ankyrin repeat protein RC0877 (80 aa).

The ANK repeat unit spans residues S6 to E46.

The sequence is that of Putative ankyrin repeat protein RC0877 from Rickettsia conorii (strain ATCC VR-613 / Malish 7).